Here is a 136-residue protein sequence, read N- to C-terminus: Class I hydrophobin A (136 aa).

An N-terminal signal peptide occupies residues 1–16 (MRFALAITTLIAAVTA). Disulfide bonds link Cys-39–Cys-109, Cys-47–Cys-103, Cys-48–Cys-85, and Cys-110–Cys-128.

It belongs to the fungal hydrophobin family. In terms of tissue distribution, expressed in aerial conidia, in vitro blastospores, submerged conidia, and cells sporulating on chitin and insect cuticle, with hyd1 expression peaking in growing mycelia.

The protein resides in the secreted. It localises to the cell wall. Its subcellular location is the spore coat. It is found in the vacuole. The protein localises to the cytoplasmic vesicle. Its function is as follows. Aerial growth, conidiation, and dispersal of filamentous fungi in the environment rely upon a capability of their secreting small amphipathic proteins called hydrophobins (HPBs) with low sequence identity. Class I can self-assemble into an outermost layer of rodlet bundles on aerial cell surfaces, conferring cellular hydrophobicity that supports fungal growth, development and dispersal; whereas Class II form highly ordered films at water-air interfaces through intermolecular interactions but contribute nothing to the rodlet structure. Hyd1A contributes to certain cell wall-related features, such as hydrophobicity but is not involved in cell wall-related events during fungal proliferation in host hemocoel. Hyd1A and hyd1B coregulate the formation, morphology and orderly assembly of rodlet bundles required for conidial hydrophobicity and infectivity. Contributes to the spore coat rodlet layer. The protein is Class I hydrophobin A of Beauveria bassiana (strain ARSEF 2860) (White muscardine disease fungus).